The primary structure comprises 121 residues: Immunoglobulin heavy variable 6-1 (121 aa).

Residues 1 to 20 (MSVSFLIFLPVLGLPWGVLS) form the signal peptide. A framework-1 region spans residues 21-45 (QVQLQQSGPGLVKPSQTLSLTCAIS). One can recognise an Ig-like domain in the interval 21–121 (QVQLQQSGPG…EDTAVYYCAR (101 aa)). A disulfide bridge connects residues C42 and C119. The complementarity-determining-1 stretch occupies residues 46–55 (GDSVSSNSAA). A framework-2 region spans residues 56-72 (WNWIRQSPSRGLEWLGR). The interval 73-81 (TYYRSKWYN) is complementarity-determining-2. The interval 82-119 (DYAVSVKSRITINPDTSKNQFSLQLNSVTPEDTAVYYC) is framework-3. Residues 120–121 (AR) form a complementarity-determining-3 region.

In terms of assembly, immunoglobulins are composed of two identical heavy chains and two identical light chains; disulfide-linked.

It is found in the secreted. Its subcellular location is the cell membrane. Its function is as follows. V region of the variable domain of immunoglobulin heavy chains that participates in the antigen recognition. Immunoglobulins, also known as antibodies, are membrane-bound or secreted glycoproteins produced by B lymphocytes. In the recognition phase of humoral immunity, the membrane-bound immunoglobulins serve as receptors which, upon binding of a specific antigen, trigger the clonal expansion and differentiation of B lymphocytes into immunoglobulins-secreting plasma cells. Secreted immunoglobulins mediate the effector phase of humoral immunity, which results in the elimination of bound antigens. The antigen binding site is formed by the variable domain of one heavy chain, together with that of its associated light chain. Thus, each immunoglobulin has two antigen binding sites with remarkable affinity for a particular antigen. The variable domains are assembled by a process called V-(D)-J rearrangement and can then be subjected to somatic hypermutations which, after exposure to antigen and selection, allow affinity maturation for a particular antigen. In Homo sapiens (Human), this protein is Immunoglobulin heavy variable 6-1.